A 408-amino-acid chain; its full sequence is Diguanylate cyclase DgcN (408 aa).

Topologically, residues 1-24 are cytoplasmic; sequence MMDNDNSLNKRPTFKRALRNISMT. The chain crosses the membrane as a helical span at residues 25–45; it reads SIFITMMLIWLLLSVTSVLTL. The Periplasmic segment spans residues 46–52; that stretch reads KQYAQKN. The helical transmembrane segment at 53–73 threads the bilayer; sequence LALTAATMTYSLEAAVVFADG. At 74–112 the chain is on the cytoplasmic side; it reads PAATETLAALGQQGQFSTAEVRDKQQNILASWHYTRKDP. Residues 113 to 133 traverse the membrane as a helical segment; it reads GDTFSNFISHWLFPAPIIQPI. The Periplasmic portion of the chain corresponds to 134–154; it reads RHNGETIGEVRLTARDSSISH. Residues 155–175 traverse the membrane as a helical segment; the sequence is FIWFSLAVLTGCILLASGIAI. The Cytoplasmic portion of the chain corresponds to 176 to 408; it reads TLTRHLHNGL…KHQRAEKLVR (233 aa). Residues 183 to 236 form the HAMP domain; the sequence is NGLVEALKNITDVVHDVRSNRNFSRRVSEERIAEFHRFALDFNSLLDEMEEWQL. Residues 278 to 408 enclose the GGDEF domain; that stretch reads KTSALLFLDG…KHQRAEKLVR (131 aa). Aspartate 286 serves as a coordination point for Mg(2+). Residues asparagine 294, histidine 299, and aspartate 303 each coordinate substrate. Aspartate 329 serves as a coordination point for Mg(2+). Aspartate 329 functions as the Proton acceptor in the catalytic mechanism.

As to quaternary structure, homodimer. Interacts with the cell division proteins FtsZ and ZipA. Mg(2+) serves as cofactor.

It localises to the cell inner membrane. It carries out the reaction 2 GTP = 3',3'-c-di-GMP + 2 diphosphate. The protein operates within purine metabolism; 3',5'-cyclic di-GMP biosynthesis. With respect to regulation, inhibited by YfiR, which prevents relocation to the midcell. A reductive stress signal is required to inactivate YfiR and turn on the DGC activity of DgcN. Its function is as follows. Bifunctional protein that catalyzes the synthesis of cyclic-di-GMP (c-di-GMP) in response to reductive stress and then dynamically relocates to the division site to arrest cell division in response to envelope stress. In the presence of high intracellular c-di-GMP levels, and in response to envelope stress, interacts with cell division proteins and halts cell division, without disassembling the Z ring, but by blocking its further progress toward cytokinesis. Part of a network that regulates cell motility by altering levels of c-di-GMP. This chain is Diguanylate cyclase DgcN, found in Escherichia coli (strain K12).